Consider the following 359-residue polypeptide: N-acetyl-gamma-glutamyl-phosphate reductase (359 aa).

The active site involves C162.

It belongs to the NAGSA dehydrogenase family. Type 1 subfamily.

The protein localises to the cytoplasm. It carries out the reaction N-acetyl-L-glutamate 5-semialdehyde + phosphate + NADP(+) = N-acetyl-L-glutamyl 5-phosphate + NADPH + H(+). Its pathway is amino-acid biosynthesis; L-arginine biosynthesis; N(2)-acetyl-L-ornithine from L-glutamate: step 3/4. Functionally, catalyzes the NADPH-dependent reduction of N-acetyl-5-glutamyl phosphate to yield N-acetyl-L-glutamate 5-semialdehyde. This is N-acetyl-gamma-glutamyl-phosphate reductase from Prochlorococcus marinus (strain SARG / CCMP1375 / SS120).